The sequence spans 1264 residues: TBC1 domain family member 9 (1264 aa).

GRAM domains lie at 146–213 (VKFH…EKNA) and 293–361 (ERYR…EKAD). The segment at 410-456 (KEFSGSCNSSDDEVYSRPSSLVSSSPQRSTSSDADGERPFNLNGNSV) is disordered. Residues 425–441 (SRPSSLVSSSPQRSTSS) are compositionally biased toward low complexity. The Rab-GAP TBC domain occupies 515-702 (GIPESMRGEL…VVVDCFFYEG (188 aa)). Residues 886–921 (HSDVLASRLFQLLDENGDSLINFREFVSGLSAACHG) form the EF-hand domain. Over residues 1119 to 1138 (SEEHSLGGQMEDIKLEDSSP) the composition is skewed to basic and acidic residues. The tract at residues 1119 to 1162 (SEEHSLGGQMEDIKLEDSSPRDNGACSSMLISDDDTKDDSSMSS) is disordered.

Functionally, may act as a GTPase-activating protein for Rab family protein(s). This is TBC1 domain family member 9 (Tbc1d9) from Mus musculus (Mouse).